Here is a 619-residue protein sequence, read N- to C-terminus: DEAD-box ATP-dependent RNA helicase 14 (619 aa).

At Ala2 the chain carries N-acetylalanine. Residues 17–51 (HTLPKPWKGLIDDRTGYLYFWNPETNVTQYEKPTP) form the WW domain. Positions 47-139 (EKPTPSLPPK…APASELSPEA (93 aa)) are disordered. Low complexity predominate over residues 61-71 (VSVSSSVQVQQ). The span at 78 to 93 (PKDDDKYSRGSERVSR) shows a compositional bias: basic and acidic residues. Over residues 125–139 (PLPSSAPASELSPEA) the composition is skewed to low complexity. At Ser136 the chain carries Phosphoserine. The Q motif motif lies at 158–186 (MSFEATGFPPELLREVLSAGFSAPTPIQA). In terms of domain architecture, Helicase ATP-binding spans 189–363 (WPIAMQGRDI…ADLLVNPAQV (175 aa)). 202 to 209 (AKTGSGKT) provides a ligand contact to ATP. The DEAD box signature appears at 311 to 314 (DEAD). A Helicase C-terminal domain is found at 392 to 536 (RLEQILRSQE…RVPPQIREMA (145 aa)). Positions 528–619 (VPPQIREMAT…FHETMMMKHR (92 aa)) are disordered. Over residues 552 to 568 (PSGGRGRGGDSGYGGRG) the composition is skewed to gly residues. Composition is skewed to basic and acidic residues over residues 582-595 (GRER…ERFN) and 609-619 (SFHETMMMKHR).

It belongs to the DEAD box helicase family. DDX5/DBP2 subfamily. In terms of tissue distribution, ubiquitous. Preferentially expressed in flowers and roots.

The protein resides in the nucleus. It catalyses the reaction ATP + H2O = ADP + phosphate + H(+). Functionally, ATP-dependent RNA helicase involved nonsense-mediated mRNA decay and ribosome biogenesis through rRNA processing. This is DEAD-box ATP-dependent RNA helicase 14 (RH14) from Arabidopsis thaliana (Mouse-ear cress).